Consider the following 149-residue polypeptide: Transcriptional repressor NrdR (149 aa).

The segment at 3 to 34 (CPYCSYEESKVVDSRSAEDYNAIRRRRECLRC) is a zinc-finger region. One can recognise an ATP-cone domain in the interval 49-139 (ILVIKKDLSR…VYRQFKDINT (91 aa)).

This sequence belongs to the NrdR family. It depends on Zn(2+) as a cofactor.

In terms of biological role, negatively regulates transcription of bacterial ribonucleotide reductase nrd genes and operons by binding to NrdR-boxes. This is Transcriptional repressor NrdR from Clostridium perfringens (strain ATCC 13124 / DSM 756 / JCM 1290 / NCIMB 6125 / NCTC 8237 / Type A).